Reading from the N-terminus, the 428-residue chain is Probable oxidoreductase OrdL (428 aa).

The sequence is that of Probable oxidoreductase OrdL (ordL) from Rhizobium meliloti (strain 1021) (Ensifer meliloti).